The sequence spans 101 residues: Small ribosomal subunit protein uS14 (101 aa).

Belongs to the universal ribosomal protein uS14 family. In terms of assembly, part of the 30S ribosomal subunit. Contacts proteins S3 and S10.

In terms of biological role, binds 16S rRNA, required for the assembly of 30S particles and may also be responsible for determining the conformation of the 16S rRNA at the A site. The protein is Small ribosomal subunit protein uS14 of Chromohalobacter salexigens (strain ATCC BAA-138 / DSM 3043 / CIP 106854 / NCIMB 13768 / 1H11).